Consider the following 417-residue polypeptide: Guanine nucleotide-exchange factor SEC12 (417 aa).

Over 1–388 (MGRRRGVELY…QLHLLPSRRS (388 aa)) the chain is Cytoplasmic. Y10 is modified (3'-nitrotyrosine). The interval 101–135 (KGSKAEKSGSKEQGPRQRKGAPPAEKKSGAQVHPE) is disordered. Over residues 103-115 (SKAEKSGSKEQGP) the composition is skewed to basic and acidic residues. WD repeat units lie at residues 152–191 (SNEPLQKVVCFNHDNTLLATGGTDGHVRVWKVPSLEKVLE), 194–232 (AHEGEIGDLTLGPDGKLVTVGWDFKASVWQKDQLVTQLQ), and 298–337 (CGHEVISCLSVSDSGTFLGLGTVTGSVAIYIAFSLQRLYY). Residues 389–409 (VPVWLLLLLCVGLIIVTILLL) form a helical membrane-spanning segment. Residues 410 to 417 (QTAFPGFL) are Lumenal-facing.

Interacts with SAR1B (GDP-bound form). Interacts with MIA2; recruits PREB to endoplasmic reticulum exit sites. Interacts with CIDEB; facilitating loading of SCAP-SREBP into COPII vesicles.

The protein resides in the endoplasmic reticulum membrane. The protein localises to the nucleus. Functionally, guanine nucleotide exchange factor (GEF) that regulates the assembly of the coat protein complex II/COPII in endoplasmic reticulum (ER) to Golgi vesicle-mediated transport. Selectively activates SAR1A and SAR1B by promoting the exchange of guanosine diphosphate (GDP) for guanosine triphosphate (GTP) in these small GTPases. In their activated GTP-bound state, SAR1A and SAR1B insert into the membrane of the endoplasmic reticulum where they recruit the remainder of the coat protein complex II/COPII which is responsible for both the sorting of proteins and the deformation and budding of membranes into vesicles destined to the Golgi. Its function is as follows. Was first identified based on its probable role in the regulation of pituitary gene transcription. Binds to the prolactin gene (PRL) promoter and seems to activate transcription. This Mus musculus (Mouse) protein is Guanine nucleotide-exchange factor SEC12.